We begin with the raw amino-acid sequence, 352 residues long: C-C chemokine receptor type 5 (352 aa).

The Extracellular segment spans residues 1–30 (MDYQVSSPTYDIDYYTSEPCQKVNVKQIAA). A Sulfotyrosine modification is found at Tyr3. 2 O-linked (GalNAc...) serine glycosylation sites follow: Ser6 and Ser7. A sulfotyrosine mark is found at Tyr10, Tyr14, and Tyr15. 2 cysteine pairs are disulfide-bonded: Cys20–Cys269 and Cys101–Cys178. A helical membrane pass occupies residues 31–58 (RLLPPLYSLVFIFGFVGNILVVLILINC). Residues 59 to 68 (KRLKSMTDIY) are Cytoplasmic-facing. The chain crosses the membrane as a helical span at residues 69–89 (LLNLAISDLFFLLTVPFWAHY). Residues 90-102 (AAAQWDFGNTMCQ) are Extracellular-facing. A helical membrane pass occupies residues 103 to 124 (LLTGLYFIGFFSGIFFIILLTI). Topologically, residues 125 to 141 (DRYLAIVHAVFALKART) are cytoplasmic. The chain crosses the membrane as a helical span at residues 142–166 (VTFGVVTSVITWVVAVFASLPGIIF). Residues 167-198 (TRSQREGLHYTCSSHFPYSQYQFWKNFQTLKI) are Extracellular-facing. The helical transmembrane segment at 199–218 (VILGLVLPLLVMVICYSGIL) threads the bilayer. Topologically, residues 219-235 (KTLLRCRNEKKRHRAVR) are cytoplasmic. A helical transmembrane segment spans residues 236–260 (LIFTIMIVYFLFWAPYNIVLLLNTF). The Extracellular portion of the chain corresponds to 261–277 (QEFFGLNNCSSSNRLDQ). A helical transmembrane segment spans residues 278-301 (AMQVTETLGMTHCCINPIIYAFVG). Residues 302–352 (EKFRNYLLVFFQKHIAKRFCKCCSIFQQEAPERASSVYTRSTGEQEISVGL) are Cytoplasmic-facing. 3 S-palmitoyl cysteine lipidation sites follow: Cys321, Cys323, and Cys324. Phosphoserine; by BARK1 occurs at positions 336, 337, 342, and 349.

The protein belongs to the G-protein coupled receptor 1 family. Interacts with PRAF2. Efficient ligand binding to CCL3/MIP-1alpha and CCL4/MIP-1beta requires sulfation, O-glycosylation and sialic acid modifications. Glycosylation on Ser-6 is required for efficient binding of CCL4. Interacts with GRK2. Interacts with ARRB1 and ARRB2. Interacts with CNIH4. Interacts with S100A4; this interaction stimulates T-lymphocyte chemotaxis. In terms of processing, sulfated on at least 2 of the N-terminal tyrosines. Sulfation is required for efficient binding of the chemokines, CCL3 and CCL4. Palmitoylation in the C-terminal is important for cell surface expression. Post-translationally, phosphorylation on serine residues in the C-terminal is stimulated by binding CC chemokines especially by APO-RANTES. In terms of processing, O-glycosylated, but not N-glycosylated. Ser-6 appears to be the major site even if Ser-7 may be also O-glycosylated. Also sialylated glycans present which contribute to chemokine binding. Thr-16 and Ser-17 may also be glycosylated and, if so, with small moieties such as a T-antigen.

It is found in the cell membrane. Receptor for a number of inflammatory CC-chemokines including CCL3/MIP-1-alpha, CCL4/MIP-1-beta and RANTES and subsequently transduces a signal by increasing the intracellular calcium ion level. May play a role in the control of granulocytic lineage proliferation or differentiation. Participates in T-lymphocyte migration to the infection site by acting as a chemotactic receptor. The polypeptide is C-C chemokine receptor type 5 (CCR5) (Semnopithecus entellus (Northern plains gray langur)).